A 979-amino-acid chain; its full sequence is Protein argonaute PNH1 (979 aa).

A disordered region spans residues 1–95 (MLEVLDMAPP…GGRAGAGPGP (95 aa)). The span at 54 to 67 (AETAAATAAVAPPE) shows a compositional bias: low complexity. Residues 77 to 86 (GRRRGGRGRG) are compositionally biased toward basic residues. Positions 333 to 446 (PVIEFVAQIL…LPMEACKIVE (114 aa)) constitute a PAZ domain. The Piwi domain occupies 620 to 941 (LLLAILPDNN…AAFRARFYME (322 aa)).

Belongs to the argonaute family. Ago subfamily.

The protein localises to the cytoplasm. In terms of biological role, probably involved in the RNA silencing pathway. May bind to short RNAs such as microRNAs (miRNAs) or short interfering RNAs (siRNAs), and represses the translation of mRNAs which are complementary to them. Plays a role in the maintenance of the indeterminate state of the stem cells in the shoot apical meristem (SAM). Regulates leaf formation through vascular development and may be involved in determining the central domain of the leaf founder region. The protein is Protein argonaute PNH1 (PHN1) of Oryza sativa subsp. japonica (Rice).